Here is a 150-residue protein sequence, read N- to C-terminus: 3-hydroxyacyl-[acyl-carrier-protein] dehydratase FabZ (150 aa).

The active site involves H57.

The protein belongs to the thioester dehydratase family. FabZ subfamily.

Its subcellular location is the cytoplasm. The catalysed reaction is a (3R)-hydroxyacyl-[ACP] = a (2E)-enoyl-[ACP] + H2O. Functionally, involved in unsaturated fatty acids biosynthesis. Catalyzes the dehydration of short chain beta-hydroxyacyl-ACPs and long chain saturated and unsaturated beta-hydroxyacyl-ACPs. In Mannheimia succiniciproducens (strain KCTC 0769BP / MBEL55E), this protein is 3-hydroxyacyl-[acyl-carrier-protein] dehydratase FabZ.